The following is a 359-amino-acid chain: Peptide chain release factor 1 (359 aa).

Gln-236 bears the N5-methylglutamine mark.

This sequence belongs to the prokaryotic/mitochondrial release factor family. Post-translationally, methylated by PrmC. Methylation increases the termination efficiency of RF1.

It is found in the cytoplasm. Peptide chain release factor 1 directs the termination of translation in response to the peptide chain termination codons UAG and UAA. The polypeptide is Peptide chain release factor 1 (Streptococcus pneumoniae serotype 2 (strain D39 / NCTC 7466)).